Consider the following 179-residue polypeptide: Acireductone dioxygenase (179 aa).

The tract at residues 7 to 26 is disordered; it reads MDDAPGDPRQPHRPDPGRPV. Positions 88, 90, 94, and 133 each coordinate Fe(2+). Positions 88, 90, 94, and 133 each coordinate Ni(2+).

Belongs to the acireductone dioxygenase (ARD) family. Monomer. Interacts with MMP14. Requires Fe(2+) as cofactor. Ni(2+) is required as a cofactor. Detected in heart, colon, lung, stomach, brain, spleen, liver, skeletal muscle and kidney.

Its subcellular location is the cytoplasm. The protein localises to the nucleus. The protein resides in the cell membrane. The enzyme catalyses 1,2-dihydroxy-5-(methylsulfanyl)pent-1-en-3-one + O2 = 4-methylsulfanyl-2-oxobutanoate + formate + 2 H(+). It carries out the reaction 1,2-dihydroxy-5-(methylsulfanyl)pent-1-en-3-one + O2 = 3-(methylsulfanyl)propanoate + CO + formate + 2 H(+). The protein operates within amino-acid biosynthesis; L-methionine biosynthesis via salvage pathway; L-methionine from S-methyl-5-thio-alpha-D-ribose 1-phosphate: step 5/6. Its function is as follows. Catalyzes 2 different reactions between oxygen and the acireductone 1,2-dihydroxy-3-keto-5-methylthiopentene (DHK-MTPene) depending upon the metal bound in the active site. Fe-containing acireductone dioxygenase (Fe-ARD) produces formate and 2-keto-4-methylthiobutyrate (KMTB), the alpha-ketoacid precursor of methionine in the methionine recycle pathway. Ni-containing acireductone dioxygenase (Ni-ARD) produces methylthiopropionate, carbon monoxide and formate, and does not lie on the methionine recycle pathway. Also down-regulates cell migration mediated by MMP14. Necessary for hepatitis C virus replication in an otherwise non-permissive cell line. This chain is Acireductone dioxygenase, found in Homo sapiens (Human).